Here is a 424-residue protein sequence, read N- to C-terminus: Enolase (424 aa).

Gln162 contacts (2R)-2-phosphoglycerate. The active-site Proton donor is Glu204. Mg(2+) contacts are provided by Asp241, Glu284, and Asp311. Lys336, Arg365, Ser366, and Lys387 together coordinate (2R)-2-phosphoglycerate. Lys336 functions as the Proton acceptor in the catalytic mechanism.

This sequence belongs to the enolase family. Mg(2+) serves as cofactor.

It localises to the cytoplasm. The protein resides in the secreted. The protein localises to the cell surface. It catalyses the reaction (2R)-2-phosphoglycerate = phosphoenolpyruvate + H2O. The protein operates within carbohydrate degradation; glycolysis; pyruvate from D-glyceraldehyde 3-phosphate: step 4/5. In terms of biological role, catalyzes the reversible conversion of 2-phosphoglycerate (2-PG) into phosphoenolpyruvate (PEP). It is essential for the degradation of carbohydrates via glycolysis. This Rhizobium etli (strain ATCC 51251 / DSM 11541 / JCM 21823 / NBRC 15573 / CFN 42) protein is Enolase.